Reading from the N-terminus, the 158-residue chain is Transcription elongation factor GreA (158 aa).

This sequence belongs to the GreA/GreB family.

Functionally, necessary for efficient RNA polymerase transcription elongation past template-encoded arresting sites. The arresting sites in DNA have the property of trapping a certain fraction of elongating RNA polymerases that pass through, resulting in locked ternary complexes. Cleavage of the nascent transcript by cleavage factors such as GreA or GreB allows the resumption of elongation from the new 3'terminus. GreA releases sequences of 2 to 3 nucleotides. This chain is Transcription elongation factor GreA, found in Polaromonas naphthalenivorans (strain CJ2).